The primary structure comprises 299 residues: ATP phosphoribosyltransferase (299 aa).

It belongs to the ATP phosphoribosyltransferase family. Long subfamily. Requires Mg(2+) as cofactor.

It localises to the cytoplasm. It carries out the reaction 1-(5-phospho-beta-D-ribosyl)-ATP + diphosphate = 5-phospho-alpha-D-ribose 1-diphosphate + ATP. It participates in amino-acid biosynthesis; L-histidine biosynthesis; L-histidine from 5-phospho-alpha-D-ribose 1-diphosphate: step 1/9. Feedback inhibited by histidine. Its function is as follows. Catalyzes the condensation of ATP and 5-phosphoribose 1-diphosphate to form N'-(5'-phosphoribosyl)-ATP (PR-ATP). Has a crucial role in the pathway because the rate of histidine biosynthesis seems to be controlled primarily by regulation of HisG enzymatic activity. The sequence is that of ATP phosphoribosyltransferase from Campylobacter jejuni subsp. jejuni serotype O:6 (strain 81116 / NCTC 11828).